Reading from the N-terminus, the 327-residue chain is 4-hydroxy-2-oxoglutarate aldolase, mitochondrial (327 aa).

Residues 1 to 25 (MLVPRVWSSVRLGLSRVLSRTLRGW) constitute a mitochondrion transit peptide. A substrate-binding site is contributed by 77 to 78 (SN). K196 (schiff-base intermediate with substrate) is an active-site residue. Substrate contacts are provided by S198 and G222.

The protein belongs to the DapA family. Homotetramer.

It is found in the mitochondrion. The catalysed reaction is (4S)-4-hydroxy-2-oxoglutarate = glyoxylate + pyruvate. The enzyme catalyses (4R)-4-hydroxy-2-oxoglutarate = glyoxylate + pyruvate. Inhibited by divalent cations. Catalyzes the final step in the metabolic pathway of hydroxyproline. The polypeptide is 4-hydroxy-2-oxoglutarate aldolase, mitochondrial (HOGA1) (Bos taurus (Bovine)).